Reading from the N-terminus, the 391-residue chain is U-box domain-containing protein 57 (391 aa).

In terms of domain architecture, MIF4G spans 1 to 178 (MVKNSYVLFA…DLTERLLQVE (178 aa)). Residues 322–391 (QPPPSFICPI…LRSAIEELGR (70 aa)) enclose the U-box domain.

It carries out the reaction S-ubiquitinyl-[E2 ubiquitin-conjugating enzyme]-L-cysteine + [acceptor protein]-L-lysine = [E2 ubiquitin-conjugating enzyme]-L-cysteine + N(6)-ubiquitinyl-[acceptor protein]-L-lysine.. Its pathway is protein modification; protein ubiquitination. Functions as an E3 ubiquitin ligase. This is U-box domain-containing protein 57 (PUB57) from Arabidopsis thaliana (Mouse-ear cress).